We begin with the raw amino-acid sequence, 56 residues long: UPF0434 protein CbuK_1382 (56 aa).

This sequence belongs to the UPF0434 family.

This Coxiella burnetii (strain CbuK_Q154) (Coxiella burnetii (strain Q154)) protein is UPF0434 protein CbuK_1382.